The chain runs to 122 residues: Large ribosomal subunit protein uL14c (122 aa).

This sequence belongs to the universal ribosomal protein uL14 family. Part of the 50S ribosomal subunit.

Its subcellular location is the plastid. It localises to the chloroplast. In terms of biological role, binds to 23S rRNA. In Piper cenocladum (Ant piper), this protein is Large ribosomal subunit protein uL14c.